The following is a 243-amino-acid chain: ATP synthase subunit a (243 aa).

8 consecutive transmembrane segments (helical) span residues 29 to 49 (NASLFMVLSTFLISLSCYVGL), 54 to 74 (VIPNPLQSIIEIIYDFIVSTI), 89 to 109 (VFTIFTFILVCNLLGILPLGF), 114 to 134 (HIAVTFAISMIVFISVTFIGF), 141 to 161 (FLHILLPQGTPMWLAPMMVLI), 177 to 197 (LAANMIAGHTIIKVIAGFVIN), 200 to 220 (IFLTPLPIAFIIILIGFEIFV), and 221 to 241 (AILQAYIFTVLTCVYLSDAVN).

Belongs to the ATPase A chain family. F-type ATPases have 2 components, CF(1) - the catalytic core - and CF(0) - the membrane proton channel. CF(1) has five subunits: alpha(3), beta(3), gamma(1), delta(1), epsilon(1). CF(0) has three main subunits: a(1), b(2) and c(9-12). The alpha and beta chains form an alternating ring which encloses part of the gamma chain. CF(1) is attached to CF(0) by a central stalk formed by the gamma and epsilon chains, while a peripheral stalk is formed by the delta and b chains.

The protein resides in the cell inner membrane. In terms of biological role, key component of the proton channel; it plays a direct role in the translocation of protons across the membrane. The sequence is that of ATP synthase subunit a from Ehrlichia ruminantium (strain Welgevonden).